Reading from the N-terminus, the 207-residue chain is Small ribosomal subunit protein uS4 (207 aa).

The interval 30–54 is disordered; the sequence is DKCKLDSKPGQHGRTSGARTSDYGN. Residues 42 to 53 are compositionally biased toward polar residues; it reads GRTSGARTSDYG. The 64-residue stretch at 97–160 folds into the S4 RNA-binding domain; it reads SRLDNVVYRM…KKQVRIAEAL (64 aa).

The protein belongs to the universal ribosomal protein uS4 family. As to quaternary structure, part of the 30S ribosomal subunit. Contacts protein S5. The interaction surface between S4 and S5 is involved in control of translational fidelity.

In terms of biological role, one of the primary rRNA binding proteins, it binds directly to 16S rRNA where it nucleates assembly of the body of the 30S subunit. With S5 and S12 plays an important role in translational accuracy. The sequence is that of Small ribosomal subunit protein uS4 from Cupriavidus taiwanensis (strain DSM 17343 / BCRC 17206 / CCUG 44338 / CIP 107171 / LMG 19424 / R1) (Ralstonia taiwanensis (strain LMG 19424)).